The following is a 424-amino-acid chain: L-glutamine:2-deoxy-scyllo-inosose aminotransferase (424 aa).

Lysine 202 bears the N6-(pyridoxal phosphate)lysine mark.

The protein belongs to the DegT/DnrJ/EryC1 family. L-glutamine:2-deoxy-scyllo-inosose/scyllo-inosose aminotransferase subfamily. It depends on pyridoxal 5'-phosphate as a cofactor.

The catalysed reaction is 2-deoxy-L-scyllo-inosose + L-glutamine = 2-deoxy-scyllo-inosamine + 2-oxoglutaramate. It carries out the reaction 3-amino-2,3-dideoxy-scyllo-inosose + L-glutamine = 2-deoxystreptamine + 2-oxoglutaramate. The protein operates within metabolic intermediate biosynthesis; 2-deoxystreptamine biosynthesis; 2-deoxystreptamine from D-glucose 6-phosphate: step 2/4. It functions in the pathway metabolic intermediate biosynthesis; 2-deoxystreptamine biosynthesis; 2-deoxystreptamine from D-glucose 6-phosphate: step 4/4. It participates in antibiotic biosynthesis; neomycin biosynthesis. Its function is as follows. Catalyzes the PLP-dependent transamination of 2-deoxy-scyllo-inosose (2-DOI) to form 2-deoxy-scyllo-inosamine (2-DOIA) using L-glutamine as the amino donor. Also catalyzes the transamination of 3-amino-2,3-dideoxy-scyllo-inosose (keto-2-DOIA) into 2-deoxystreptamine (2-DOS). In Streptomyces fradiae (Streptomyces roseoflavus), this protein is L-glutamine:2-deoxy-scyllo-inosose aminotransferase (neoB).